We begin with the raw amino-acid sequence, 154 residues long: MRFCRGTVLGRSAAGMAVLLALGACYEEDDQTLPSAAPGESVAAESTHWLEIDDSRSPETFLSAESGLPAQTLAPLLGALSAHYRESPRMIANRVLQLWQEYPDTPLERIMADLVPARDAPEESLGPVAQQYRVLRAGGAGHADAVAAAMGQRE.

This Paracoccus denitrificans protein is Protein MoxZ (moxZ).